Here is a 3848-residue protein sequence, read N- to C-terminus: Intermembrane lipid transfer protein tipC (3848 aa).

In terms of domain architecture, Chorein N-terminal spans 4–112 (HIAASVLTKY…KFQDEKQAKL (109 aa)). Disordered regions lie at residues 243–268 (IKKE…DEIE), 450–481 (LKLQ…TGGG), 966–985 (QQLQ…SPPL), 1174–1219 (KNNQ…NNNS), 1326–1345 (ERKL…GVST), 1907–1926 (ENIN…TTTT), 2024–2047 (DDYN…NQLP), 2209–2290 (IKPA…NKNL), 2330–2353 (FNPK…SPLL), 2509–2541 (KQLN…NLLG), 3209–3228 (GITN…NNND), and 3310–3342 (INQQ…NTTQ). Low complexity-rich tracts occupy residues 251 to 260 (QQQQQQQQQG) and 452 to 477 (LQQQ…PSTS). Low complexity predominate over residues 1175 to 1190 (NNQNNNQNNNQNNNQN). A compositionally biased stretch (polar residues) spans 1191 to 1200 (INESSPTVFI). A compositionally biased stretch (pro residues) spans 1202–1211 (SPPPPPPPPL). Residues 1333 to 1345 (TSPTTPSSSGVST) show a composition bias toward low complexity. 3 stretches are compositionally biased toward low complexity: residues 2029 to 2044 (DNYN…NSNN), 2217 to 2289 (NNNN…NNKN), and 2335 to 2353 (SSSS…SPLL). Composition is skewed to low complexity over residues 3212 to 3228 (NDPN…NNND) and 3311 to 3342 (NQQP…NTTQ).

It belongs to the VPS13 family.

It is found in the membrane. Functionally, mediates the transfer of lipids between membranes at organelle contact sites. The chain is Intermembrane lipid transfer protein tipC (tipC) from Dictyostelium discoideum (Social amoeba).